The primary structure comprises 150 residues: Phosphopantetheine adenylyltransferase (150 aa).

Threonine 9 contacts substrate. ATP contacts are provided by residues 9–10 and histidine 17; that span reads TF. Substrate contacts are provided by lysine 41, threonine 73, and arginine 87. Residues 88 to 90, glutamate 98, and 122 to 128 each bind ATP; these read GIR and LTCVSST.

This sequence belongs to the bacterial CoaD family. Homohexamer. Mg(2+) serves as cofactor.

The protein resides in the cytoplasm. The enzyme catalyses (R)-4'-phosphopantetheine + ATP + H(+) = 3'-dephospho-CoA + diphosphate. Its pathway is cofactor biosynthesis; coenzyme A biosynthesis; CoA from (R)-pantothenate: step 4/5. Functionally, reversibly transfers an adenylyl group from ATP to 4'-phosphopantetheine, yielding dephospho-CoA (dPCoA) and pyrophosphate. This is Phosphopantetheine adenylyltransferase from Bacteroides fragilis (strain ATCC 25285 / DSM 2151 / CCUG 4856 / JCM 11019 / LMG 10263 / NCTC 9343 / Onslow / VPI 2553 / EN-2).